The following is a 142-amino-acid chain: Phosphoribosyl-AMP cyclohydrolase (142 aa).

Mg(2+) is bound at residue D85. C86 lines the Zn(2+) pocket. Residues D87 and D89 each coordinate Mg(2+). Zn(2+)-binding residues include C102 and C109. The tract at residues 120 to 142 is disordered; sequence GEPPTPVGAGERQPASGTADAAP.

This sequence belongs to the PRA-CH family. Homodimer. Mg(2+) is required as a cofactor. Requires Zn(2+) as cofactor.

It is found in the cytoplasm. It carries out the reaction 1-(5-phospho-beta-D-ribosyl)-5'-AMP + H2O = 1-(5-phospho-beta-D-ribosyl)-5-[(5-phospho-beta-D-ribosylamino)methylideneamino]imidazole-4-carboxamide. It participates in amino-acid biosynthesis; L-histidine biosynthesis; L-histidine from 5-phospho-alpha-D-ribose 1-diphosphate: step 3/9. Catalyzes the hydrolysis of the adenine ring of phosphoribosyl-AMP. The protein is Phosphoribosyl-AMP cyclohydrolase of Acidothermus cellulolyticus (strain ATCC 43068 / DSM 8971 / 11B).